The primary structure comprises 474 residues: Dihydrolipoyl dehydrogenase (474 aa).

FAD-binding positions include 34-42 (EKEKLGGTC), lysine 51, and glycine 114. A disulfide bridge connects residues cysteine 42 and cysteine 47. Residues 188 to 192 (GGGVI), glutamate 211, valine 245, and 278 to 281 (SIGR) contribute to the NAD(+) site. FAD contacts are provided by aspartate 320 and alanine 328. Catalysis depends on histidine 453, which acts as the Proton acceptor.

It belongs to the class-I pyridine nucleotide-disulfide oxidoreductase family. Homodimer. The cofactor is FAD.

The protein localises to the cytoplasm. The catalysed reaction is N(6)-[(R)-dihydrolipoyl]-L-lysyl-[protein] + NAD(+) = N(6)-[(R)-lipoyl]-L-lysyl-[protein] + NADH + H(+). Its function is as follows. The branched-chain alpha-keto dehydrogenase complex catalyzes the overall conversion of alpha-keto acids to acyl-CoA and CO(2). It contains multiple copies of 3 enzymatic components: branched-chain alpha-keto acid decarboxylase (E1), lipoamide acyltransferase (E2) and lipoamide dehydrogenase (E3). This is Dihydrolipoyl dehydrogenase (bfmBC) from Bacillus subtilis (strain 168).